We begin with the raw amino-acid sequence, 553 residues long: CTP synthase (553 aa).

An amidoligase domain region spans residues 1-266; it reads MTKNYIFITG…DNYICEYFKL (266 aa). Ser14 contacts CTP. Residue Ser14 participates in UTP binding. ATP contacts are provided by residues 15–20 and Asp72; that span reads SLGKGI. Residues Asp72 and Glu140 each contribute to the Mg(2+) site. CTP-binding positions include 147–149, 187–192, and Lys223; these read DIE and KTKPTQ. UTP is bound by residues 187 to 192 and Lys223; that span reads KTKPTQ. Residue 239–241 coordinates ATP; sequence KDV. The 254-residue stretch at 291-544 folds into the Glutamine amidotransferase type-1 domain; sequence IIGIIGKYIK…IKSAKKNKKN (254 aa). Gly352 contributes to the L-glutamine binding site. Residue Cys379 is the Nucleophile; for glutamine hydrolysis of the active site. Residues 380 to 383, Glu403, and Arg472 each bind L-glutamine; that span reads LGMQ. Residues His517 and Glu519 contribute to the active site.

Belongs to the CTP synthase family. As to quaternary structure, homotetramer.

The catalysed reaction is UTP + L-glutamine + ATP + H2O = CTP + L-glutamate + ADP + phosphate + 2 H(+). The enzyme catalyses L-glutamine + H2O = L-glutamate + NH4(+). It catalyses the reaction UTP + NH4(+) + ATP = CTP + ADP + phosphate + 2 H(+). It participates in pyrimidine metabolism; CTP biosynthesis via de novo pathway; CTP from UDP: step 2/2. With respect to regulation, allosterically activated by GTP, when glutamine is the substrate; GTP has no effect on the reaction when ammonia is the substrate. The allosteric effector GTP functions by stabilizing the protein conformation that binds the tetrahedral intermediate(s) formed during glutamine hydrolysis. Inhibited by the product CTP, via allosteric rather than competitive inhibition. Catalyzes the ATP-dependent amination of UTP to CTP with either L-glutamine or ammonia as the source of nitrogen. Regulates intracellular CTP levels through interactions with the four ribonucleotide triphosphates. The polypeptide is CTP synthase (Buchnera aphidicola subsp. Schizaphis graminum (strain Sg)).